Reading from the N-terminus, the 239-residue chain is Large ribosomal subunit protein uL1 (239 aa).

It belongs to the universal ribosomal protein uL1 family. Part of the 50S ribosomal subunit.

Functionally, binds directly to 23S rRNA. The L1 stalk is quite mobile in the ribosome, and is involved in E site tRNA release. In terms of biological role, protein L1 is also a translational repressor protein, it controls the translation of the L11 operon by binding to its mRNA. This Rickettsia bellii (strain OSU 85-389) protein is Large ribosomal subunit protein uL1.